The sequence spans 1132 residues: Major DNA-binding protein (1132 aa).

Residues 1103 to 1132 (VEELFPSPGVPSLTVGKKRKIASLLSDLDL) are required for nuclear localization.

It belongs to the herpesviridae major DNA-binding protein family. As to quaternary structure, homooligomers. Forms double-helical filaments necessary for the formation of replication compartments within the host nucleus. Interacts with the origin-binding protein. Interacts with the helicase primase complex; this interaction stimulates primer synthesis activity of the helicase-primase complex. Interacts with the DNA polymerase. Interacts with the alkaline exonuclease; this interaction increases its nuclease processivity.

It is found in the host nucleus. In terms of biological role, plays several crucial roles in viral infection. Participates in the opening of the viral DNA origin to initiate replication by interacting with the origin-binding protein. May disrupt loops, hairpins and other secondary structures present on ssDNA to reduce and eliminate pausing of viral DNA polymerase at specific sites during elongation. Promotes viral DNA recombination by performing strand-transfer, characterized by the ability to transfer a DNA strand from a linear duplex to a complementary single-stranded DNA circle. Can also catalyze the renaturation of complementary single strands. Additionally, reorganizes the host cell nucleus, leading to the formation of prereplicative sites and replication compartments. This process is driven by the protein which can form double-helical filaments in the absence of DNA. This Human herpesvirus 8 type P (isolate GK18) (HHV-8) protein is Major DNA-binding protein.